The chain runs to 343 residues: uncharacterized protein (343 aa).

This is an uncharacterized protein from Methanocaldococcus jannaschii (strain ATCC 43067 / DSM 2661 / JAL-1 / JCM 10045 / NBRC 100440) (Methanococcus jannaschii).